The chain runs to 341 residues: MQKSYSLQELATQIGATVRGNADVVVENIAPLDKAQSNQLTFISNVKFRALLKDSKAGILVVSEEDVEHCSPESNLLIVKDPYVAYAILAQYMDSTPKAAQGIAKSAVIFDGVLLGENVSIGANAVIEEGVVLGDNVIIGANCFVGKNTKIGSGTQLWANVTVYHNVEIGANCLIQSGTVIGSDGFGYANDRGRWIKIPQVGQVIIGNNVEIGANTCIDRGALDATIIEDNVIIDNLCQIAHNVHIGTGTAVAGGVIMAGSLTVGRYCLIGGASVINGHMEICDKVTITGMGMVMRPITEPGVYSSGIPLQTNKEWRKTAALTLGIDGINKRLKALEKKIS.

His242 (proton acceptor) is an active-site residue.

The protein belongs to the transferase hexapeptide repeat family. LpxD subfamily. As to quaternary structure, homotrimer.

The catalysed reaction is a UDP-3-O-[(3R)-3-hydroxyacyl]-alpha-D-glucosamine + a (3R)-hydroxyacyl-[ACP] = a UDP-2-N,3-O-bis[(3R)-3-hydroxyacyl]-alpha-D-glucosamine + holo-[ACP] + H(+). It functions in the pathway bacterial outer membrane biogenesis; LPS lipid A biosynthesis. Its function is as follows. Catalyzes the N-acylation of UDP-3-O-acylglucosamine using 3-hydroxyacyl-ACP as the acyl donor. Is involved in the biosynthesis of lipid A, a phosphorylated glycolipid that anchors the lipopolysaccharide to the outer membrane of the cell. This chain is UDP-3-O-acylglucosamine N-acyltransferase, found in Haemophilus influenzae (strain 86-028NP).